Reading from the N-terminus, the 343-residue chain is GTPase Obg (343 aa).

The Obg domain occupies 1–159 (MKFVDSASIF…LQLDMELKLM (159 aa)). The interval 121 to 144 (GHGGRGNQHFATSTNQAPRRSEPG) is disordered. Residues 129 to 138 (HFATSTNQAP) show a composition bias toward polar residues. The 164-residue stretch at 160–323 (ADVGLVGFPN…LKDELWREVS (164 aa)) folds into the OBG-type G domain. GTP is bound by residues 166-173 (GFPNAGKS), 191-195 (FTTLV), 213-216 (DIPG), 280-283 (TKMD), and 304-306 (SSV). The Mg(2+) site is built by Ser-173 and Thr-193. The interval 322–343 (VSMRDRPEESSDPEGEGDGGTP) is disordered. Over residues 331 to 343 (SSDPEGEGDGGTP) the composition is skewed to acidic residues.

This sequence belongs to the TRAFAC class OBG-HflX-like GTPase superfamily. OBG GTPase family. In terms of assembly, monomer. Mg(2+) serves as cofactor.

It is found in the cytoplasm. In terms of biological role, an essential GTPase which binds GTP, GDP and possibly (p)ppGpp with moderate affinity, with high nucleotide exchange rates and a fairly low GTP hydrolysis rate. Plays a role in control of the cell cycle, stress response, ribosome biogenesis and in those bacteria that undergo differentiation, in morphogenesis control. The protein is GTPase Obg of Chlorobium luteolum (strain DSM 273 / BCRC 81028 / 2530) (Pelodictyon luteolum).